The primary structure comprises 205 residues: Protein TGAM_1450 (205 aa).

Positions 7-201 constitute an AMMECR1 domain; the sequence is EWGEFLVRLA…EEYPRGPVRR (195 aa).

The chain is Protein TGAM_1450 from Thermococcus gammatolerans (strain DSM 15229 / JCM 11827 / EJ3).